The chain runs to 1111 residues: Phytochrome C (1111 aa).

The 181-residue stretch at 213–393 (NMLLLCDALV…VFGVQINKEA (181 aa)) folds into the GAF domain. Cys318 contributes to the phytochromobilin binding site. 2 consecutive PAS domains span residues 604-674 (IVNE…LEGS) and 737-808 (DYAR…TKLR). The Histidine kinase domain maps to 889–1111 (YLRHEVKDPE…FVILTEFPLI (223 aa)).

It belongs to the phytochrome family. As to quaternary structure, homodimer. In terms of processing, contains one covalently linked phytochromobilin chromophore.

Regulatory photoreceptor which exists in two forms that are reversibly interconvertible by light: the Pr form that absorbs maximally in the red region of the spectrum and the Pfr form that absorbs maximally in the far-red region. Photoconversion of Pr to Pfr induces an array of morphogenic responses, whereas reconversion of Pfr to Pr cancels the induction of those responses. Pfr controls the expression of a number of nuclear genes including those encoding the small subunit of ribulose-bisphosphate carboxylase, chlorophyll A/B binding protein, protochlorophyllide reductase, rRNA, etc. It also controls the expression of its own gene(s) in a negative feedback fashion. This is Phytochrome C (PHYC) from Arabidopsis thaliana (Mouse-ear cress).